The following is a 581-amino-acid chain: Pentatricopeptide repeat-containing protein At1g34160 (581 aa).

9 PPR repeats span residues 67–101, 108–142, 143–173, 174–208, 209–239, 240–270, 272–306, 307–341, and 342–372; these read LTNDWNAIIRGFAGSSHPSLAFSWYRSMLQQSSSS, DALTCSFTLKACARALCSSAMDQLHCQINRRGLSA, DSLLCTTLLDAYSKNGDLISAYKLFDEMPVR, DVASWNALIAGLVSGNRASEAMELYKRMETEGIRR, SEVTVVAALGACSHLGDVKEGENIFHGYSND, NVIVSNAAIDMYSKCGFVDKAYQVFEQFTGK, SVVTWNTMITGFAVHGEAHRALEIFDKLEDNGIKP, DDVSYLAALTACRHAGLVEYGLSVFNNMACKGVER, and NMKHYGCVVDLLSRAGRLREAHDIICSMSMI. The interval 377 to 452 is type E motif; the sequence is LWQSLLGASE…IPGLSYIEAK (76 aa). The interval 453 to 483 is type E(+) motif; sequence GTIHEFYNSDKSHEQWREIYEKIDEIRFKIR. The segment at 484 to 581 is type DYW motif; the sequence is EDGYVAQTGL…DGSCSCRDFW (98 aa).

It belongs to the PPR family. PCMP-H subfamily.

This Arabidopsis thaliana (Mouse-ear cress) protein is Pentatricopeptide repeat-containing protein At1g34160 (PCMP-H68).